Reading from the N-terminus, the 315-residue chain is Olfactory receptor 2V2 (315 aa).

At 1-26 (METWVNQSYTDGFFLLGIFSHSTADL) the chain is on the extracellular side. Asn6 is a glycosylation site (N-linked (GlcNAc...) asparagine). Residues 27–50 (VLFSVVMAVFTVALCGNVLLIFLI) form a helical membrane-spanning segment. The Cytoplasmic portion of the chain corresponds to 51–58 (YMDPHLHT). Residues 59–80 (PMYFFLSQLSLMDLMLVCTNVP) traverse the membrane as a helical segment. Topologically, residues 81–101 (KMAANFLSGRKSISFVGCGIQ) are extracellular. Cys98 and Cys190 are joined by a disulfide. A helical transmembrane segment spans residues 102 to 121 (IGLFVCLVGSEGLLLGLMAY). Residues 122–140 (DRYVAISHPLHYPILMNQR) lie on the Cytoplasmic side of the membrane. Residues 141–159 (VCLQITGSSWAFGIIDGLI) form a helical membrane-spanning segment. Residues 160–196 (QMVVVMNFPYCGLRKVNHFFCEMLSLLKLACVDTSLF) are Extracellular-facing. Residues 197–220 (EKVIFACCVFMLLFPFSIIVASYA) form a helical membrane-spanning segment. Residues 221–237 (HILGTVLQMHSAQAWKK) lie on the Cytoplasmic side of the membrane. The helical transmembrane segment at 238–260 (ALATCSSHLTAVTLFYGAAMFIY) threads the bilayer. Residues 261-273 (LRPRHYRAPSHDK) lie on the Extracellular side of the membrane. Residues 274-293 (VASIFYTVLTPMLNPLIYSL) form a helical membrane-spanning segment. Residues 294–315 (RNREVMGALRKGLDRCRIGSQH) lie on the Cytoplasmic side of the membrane.

It belongs to the G-protein coupled receptor 1 family.

The protein resides in the cell membrane. Its function is as follows. Odorant receptor. The sequence is that of Olfactory receptor 2V2 (OR2V2) from Homo sapiens (Human).